Here is an 87-residue protein sequence, read N- to C-terminus: Small ribosomal subunit protein bS20 (87 aa).

The disordered stretch occupies residues 1–22 (MANSAGSKKRARQAVKSRAHNG). A compositionally biased stretch (basic residues) spans 7–19 (SKKRARQAVKSRA).

This sequence belongs to the bacterial ribosomal protein bS20 family.

Binds directly to 16S ribosomal RNA. This Marinomonas sp. (strain MWYL1) protein is Small ribosomal subunit protein bS20.